A 312-amino-acid polypeptide reads, in one-letter code: Bifunctional pinoresinol-lariciresinol reductase 2 (312 aa).

NADP(+) contacts are provided by residues 11-17, Arg36, and Lys45; that span reads GGTGYIG. Lys138 (proton acceptor) is an active-site residue. Position 142 (Arg142) interacts with NADP(+). Residue His270 coordinates substrate.

It belongs to the NmrA-type oxidoreductase family. Isoflavone reductase subfamily. Dimer.

The enzyme catalyses (+)-lariciresinol + NADP(+) = (+)-pinoresinol + NADPH + H(+). It catalyses the reaction (-)-secoisolariciresinol + NADP(+) = (+)-lariciresinol + NADPH + H(+). It carries out the reaction (-)-lariciresinol + NADP(+) = (-)-pinoresinol + NADPH + H(+). Reductase involved in lignan biosynthesis. Catalyzes the enantioselective sequential conversion of (+)-pinoresinol into (+)-lariciresinol and of (+)-lariciresinol into (-)-secoisolariciresinol. Can also convert with a lower efficiency (-)-pinoresinol into (-)-lariciresinol, but not (-)-lariciresinol into (+)-secoisolariciresinol. Abstracts the 4R-hydride from the NADPH cofactor during catalysis. The polypeptide is Bifunctional pinoresinol-lariciresinol reductase 2 (PLR_Tp2) (Thuja plicata (Western red-cedar)).